Here is a 599-residue protein sequence, read N- to C-terminus: Elongation factor 4 (599 aa).

Residues 4–186 enclose the tr-type G domain; sequence KFIRNFSIIA…AIIKHVPPPL (183 aa). GTP is bound by residues 16–21 and 133–136; these read DHGKST and NKID.

The protein belongs to the TRAFAC class translation factor GTPase superfamily. Classic translation factor GTPase family. LepA subfamily.

The protein resides in the cell membrane. The catalysed reaction is GTP + H2O = GDP + phosphate + H(+). Required for accurate and efficient protein synthesis under certain stress conditions. May act as a fidelity factor of the translation reaction, by catalyzing a one-codon backward translocation of tRNAs on improperly translocated ribosomes. Back-translocation proceeds from a post-translocation (POST) complex to a pre-translocation (PRE) complex, thus giving elongation factor G a second chance to translocate the tRNAs correctly. Binds to ribosomes in a GTP-dependent manner. The protein is Elongation factor 4 of Ureaplasma parvum serovar 3 (strain ATCC 27815 / 27 / NCTC 11736).